The following is a 254-amino-acid chain: Alcohol dehydrogenase (254 aa).

10 to 33 (FVAGLGGIGLDTSREIVKSGPKNL) provides a ligand contact to NAD(+). Ser-138 contributes to the substrate binding site. Residue Tyr-151 is the Proton acceptor of the active site.

This sequence belongs to the short-chain dehydrogenases/reductases (SDR) family. Homodimer.

The enzyme catalyses a primary alcohol + NAD(+) = an aldehyde + NADH + H(+). It catalyses the reaction a secondary alcohol + NAD(+) = a ketone + NADH + H(+). The protein is Alcohol dehydrogenase (Adh) of Drosophila heteroneura (Fruit fly).